The sequence spans 208 residues: 3,4-dihydroxy-2-butanone 4-phosphate synthase (208 aa).

Thr3 carries the post-translational modification Phosphothreonine. Residue Glu27 coordinates Mg(2+). Asp31 serves as a coordination point for D-ribulose 5-phosphate. Cys56 carries the post-translational modification S-glutathionyl cysteine; by GRX2. D-ribulose 5-phosphate is bound by residues Thr88 and 145-149 (RRGHT). His148 is a binding site for Mg(2+).

The protein belongs to the DHBP synthase family. Homodimer. Requires Mg(2+) as cofactor. The cofactor is Mn(2+). Post-translationally, S-glutathionylation of Cys-56 is reversible and dependent on the cytoplasmic isoform of glutaredoxin-2.

The protein resides in the cytoplasm. The protein localises to the nucleus. It localises to the mitochondrion intermembrane space. It carries out the reaction D-ribulose 5-phosphate = (2S)-2-hydroxy-3-oxobutyl phosphate + formate + H(+). It functions in the pathway cofactor biosynthesis; riboflavin biosynthesis; 2-hydroxy-3-oxobutyl phosphate from D-ribulose 5-phosphate: step 1/1. Its function is as follows. Catalyzes the conversion of D-ribulose 5-phosphate to formate and 3,4-dihydroxy-2-butanone 4-phosphate. Also has an unrelated function in expression of mitochondrial respiration. This is 3,4-dihydroxy-2-butanone 4-phosphate synthase (RIB3) from Saccharomyces cerevisiae (strain ATCC 204508 / S288c) (Baker's yeast).